The primary structure comprises 181 residues: Inner membrane-spanning protein YciB (181 aa).

5 consecutive transmembrane segments (helical) span residues 10-30 (LIIF…GALI), 50-70 (MHLI…VFHD), 72-92 (AFIK…LGVS), 118-138 (VTWY…YVAF), and 148-168 (FKVF…VFYL).

Belongs to the YciB family.

The protein localises to the cell inner membrane. In terms of biological role, plays a role in cell envelope biogenesis, maintenance of cell envelope integrity and membrane homeostasis. This Shewanella sp. (strain ANA-3) protein is Inner membrane-spanning protein YciB.